Consider the following 77-residue polypeptide: Apelin (77 aa).

The signal sequence occupies residues Met1–Gly22. A propeptide spanning residues Gly23 to His41 is cleaved from the precursor. The disordered stretch occupies residues Val43–Phe77. The span at Gly58 to His71 shows a compositional bias: basic residues.

It belongs to the apelin family. Post-translationally, several active peptides may be produced by proteolytic processing of the peptide precursor. Expressed in the brain with highest levels in the frontal cortex, thalamus, hypothalamus and midbrain. Secreted by the mammary gland into the colostrum and the milk.

It localises to the secreted. The protein localises to the extracellular space. Functionally, peptide hormone that functions as endogenous ligand for the G-protein-coupled apelin receptor (APLNR/APJ), that plays a role in cadiovascular homeostasis. Functions as a balanced agonist activating both G(i) protein pathway and beta-arrestin pathway of APLNR. Downstream G proteins activation, apelin can inhibit cAMP production and activate key intracellular effectors such as ERKs. On the other hand, APLNR activation induces beta-arrestin recruitment to the membrane leading to desensitization and internalization of the receptor. Apelin blunts cardiac hypertrophic induction from APLNR on response to pathological stimuli, but also induces myocardial hypertrophy under normal conditions. Apelin-36 dissociates more hardly than (pyroglu)apelin-13 from APLNR. Involved in the regulation of cardiac precursor cell movements during gastrulation and heart morphogenesis. Has an inhibitory effect on cytokine production in response to T-cell receptor/CD3 cross-linking; the oral intake of apelin in the colostrum and the milk might therefore modulate immune responses in neonates. Plays a role in early coronary blood vessels formation. Mediates myocardial contractility in an ERK1/2-dependent manner. May also have a role in the central control of body fluid homeostasis by influencing vasopressin release and drinking behavior. (Microbial infection) Endogenous ligand for the apelin receptor (APLNR), an alternative coreceptor with CD4 for HIV-1 infection. Inhibits HIV-1 entry in cells coexpressing CD4 and APLNR. Apelin-36 has a greater inhibitory activity on HIV infection than other synthetic apelin derivatives. The sequence is that of Apelin from Homo sapiens (Human).